The following is a 588-amino-acid chain: Putative calcium-binding mitochondrial carrier F55A11.4 (588 aa).

Over residues M1–A14 the composition is skewed to polar residues. A disordered region spans residues M1–Y25. 4 consecutive EF-hand domains span residues E73–H108, I109–L139, E140–P175, and L176–S211. 5 residues coordinate Ca(2+): D86, D88, D90, T92, and D97. Positions 153, 155, 157, and 164 each coordinate Ca(2+). Solcar repeat units lie at residues G246–L332, I342–T428, and P440–G529. 6 helical membrane passes run L252 to F269, G307 to Y326, S352 to M365, G403 to Y422, L446 to F463, and G504 to Y523.

This sequence belongs to the mitochondrial carrier (TC 2.A.29) family. In terms of assembly, homodimer (via N-terminus).

It is found in the mitochondrion inner membrane. Mitochondrial and calcium-binding carrier that catalyzes the calcium-dependent exchange of cytoplasmic glutamate with mitochondrial aspartate across the mitochondrial inner membrane. The polypeptide is Putative calcium-binding mitochondrial carrier F55A11.4 (Caenorhabditis elegans).